We begin with the raw amino-acid sequence, 290 residues long: L-cysteine S-thiosulfotransferase subunit SoxA (290 aa).

The N-terminal stretch at 1 to 26 is a signal peptide; sequence MPRFTKTKGTLAATALGLALAGAAFA. Zn(2+) contacts are provided by aspartate 78 and aspartate 81. Positions 78–171 constitute a Cytochrome c domain; the sequence is DDFDNPAMVF…DMLSLISLQS (94 aa). The heme c site is built by cysteine 106, cysteine 109, histidine 110, and cysteine 143. Histidine 190 contacts Zn(2+). Residues cysteine 206, cysteine 209, and histidine 210 each coordinate heme c. Arginine 247 lines the substrate pocket. Residue cysteine 251 coordinates heme c. The active-site Cysteine persulfide intermediate is the cysteine 251. Aspartate 266 provides a ligand contact to Zn(2+).

This sequence belongs to the SoxA family. Heterodimer of SoxA and SoxX. It depends on heme c as a cofactor. Requires Zn(2+) as cofactor. Post-translationally, cysteine persulfide at Cys-251.

It localises to the periplasm. The enzyme catalyses L-cysteinyl-[SoxY protein] + thiosulfate + 2 Fe(III)-[cytochrome c] = S-sulfosulfanyl-L-cysteinyl-[SoxY protein] + 2 Fe(II)-[cytochrome c] + 2 H(+). It catalyses the reaction S-sulfanyl-L-cysteinyl-[SoxY protein] + thiosulfate + 2 Fe(III)-[cytochrome c] = S-(2-sulfodisulfanyl)-L-cysteinyl-[SoxY protein] + 2 Fe(II)-[cytochrome c] + 2 H(+). Its function is as follows. C-type diheme cytochrome, which is part of the SoxAX cytochrome complex involved in sulfur oxidation. The SoxAX complex catalyzes the formation of a heterodisulfide bond between the conserved cysteine residue on a sulfur carrier SoxYZ complex subunit SoxY and thiosulfate or other inorganic sulfur substrates. This leads to the liberation of two electrons, which may be transferred from the SoxAX complex to another cytochrome c that then channels them into the respiratory electron transport chain. Some electrons may be used for reductive CO(2) fixation. The chain is L-cysteine S-thiosulfotransferase subunit SoxA from Paracoccus pantotrophus (Thiosphaera pantotropha).